A 554-amino-acid polypeptide reads, in one-letter code: Glucose-6-phosphate isomerase (554 aa).

E359 acts as the Proton donor in catalysis. Residues H390 and K518 contribute to the active site.

It belongs to the GPI family.

It localises to the cytoplasm. It carries out the reaction alpha-D-glucose 6-phosphate = beta-D-fructose 6-phosphate. The protein operates within carbohydrate biosynthesis; gluconeogenesis. It functions in the pathway carbohydrate degradation; glycolysis; D-glyceraldehyde 3-phosphate and glycerone phosphate from D-glucose: step 2/4. Catalyzes the reversible isomerization of glucose-6-phosphate to fructose-6-phosphate. This is Glucose-6-phosphate isomerase from Pseudomonas syringae pv. syringae (strain B728a).